Reading from the N-terminus, the 410-residue chain is Arginine biosynthesis bifunctional protein ArgJ (410 aa).

Residues Thr-158, Lys-184, Thr-195, Glu-282, Asn-405, and Ser-410 each coordinate substrate. Thr-195 serves as the catalytic Nucleophile.

It belongs to the ArgJ family. Heterotetramer of two alpha and two beta chains.

It localises to the cytoplasm. It carries out the reaction N(2)-acetyl-L-ornithine + L-glutamate = N-acetyl-L-glutamate + L-ornithine. The enzyme catalyses L-glutamate + acetyl-CoA = N-acetyl-L-glutamate + CoA + H(+). It participates in amino-acid biosynthesis; L-arginine biosynthesis; L-ornithine and N-acetyl-L-glutamate from L-glutamate and N(2)-acetyl-L-ornithine (cyclic): step 1/1. Its pathway is amino-acid biosynthesis; L-arginine biosynthesis; N(2)-acetyl-L-ornithine from L-glutamate: step 1/4. Its function is as follows. Catalyzes two activities which are involved in the cyclic version of arginine biosynthesis: the synthesis of N-acetylglutamate from glutamate and acetyl-CoA as the acetyl donor, and of ornithine by transacetylation between N(2)-acetylornithine and glutamate. The chain is Arginine biosynthesis bifunctional protein ArgJ from Bartonella henselae (strain ATCC 49882 / DSM 28221 / CCUG 30454 / Houston 1) (Rochalimaea henselae).